The primary structure comprises 276 residues: UPF0328 protein ECU04_0100 (276 aa).

Residues 1–24 (MGIIDVQRSHLTATPSKERDAPAH) form a disordered region.

Belongs to the UPF0328 family.

In Encephalitozoon cuniculi (strain GB-M1) (Microsporidian parasite), this protein is UPF0328 protein ECU04_0100.